Here is a 608-residue protein sequence, read N- to C-terminus: Coilin (608 aa).

The interval 134 to 272 is disordered; that stretch reads KETGGYESES…RKKAKRQWLR (139 aa). Acidic residues predominate over residues 141–155; the sequence is SESEEDELEEEAEEF. Residues 161 to 179 show a composition bias toward basic residues; it reads ASKKRKTSSKNQSTKRKKC. The short motif at 163–170 is the Nuclear localization signal 1 element; sequence KKRKTSSK. Residue Ser187 is modified to Phosphoserine. The span at 211-228 shows a compositional bias: polar residues; that stretch reads DVQSANNDEQNNDSTKPM. Positions 235-245 are enriched in basic and acidic residues; it reads SQQEESKEHND. The short motif at 253-260 is the Nuclear localization signal 2 element; sequence TKKTPSRS. The segment covering 256 to 269 has biased composition (basic residues); sequence TPSRSARRKKAKRQ. A Tudor; atypical domain is found at 410–510; sequence YEQLVAYTGS…LLDVRSVKTS (101 aa). Residues 513–585 are disordered; that stretch reads DSAEVAKSAL…KKGSSSGGSW (73 aa). Positions 558–585 are enriched in low complexity; sequence EALSAKKAALSQANNGWNKKGSSSGGSW.

This sequence belongs to the coilin family. In terms of assembly, homooligomer. Interaction with RNA results in multimerization due to structural alteration in the NOD domain.

It is found in the nucleus. The protein localises to the cajal body. Probable component of nuclear coiled bodies, also known as Cajal bodies or CBs, which are involved in the modification and assembly of nucleoplasmic snRNPs. Required for CBs formation. Binds snRNAs and non-specific artificial RNA via the N-terminal part of the NOD domain and via the NLS2 region (212-282) of the IDD domain. The two sites are able to function independently and provide effective RNA-binding in a non-cooperative manner. The protein is Coilin of Arabidopsis thaliana (Mouse-ear cress).